A 242-amino-acid chain; its full sequence is DNA repair protein RecO (242 aa).

It belongs to the RecO family.

Involved in DNA repair and RecF pathway recombination. This chain is DNA repair protein RecO, found in Vibrio atlanticus (strain LGP32) (Vibrio splendidus (strain Mel32)).